A 150-amino-acid chain; its full sequence is 3-hydroxyacyl-[acyl-carrier-protein] dehydratase FabZ (150 aa).

The active site involves His-54.

It belongs to the thioester dehydratase family. FabZ subfamily.

Its subcellular location is the cytoplasm. The enzyme catalyses a (3R)-hydroxyacyl-[ACP] = a (2E)-enoyl-[ACP] + H2O. Its function is as follows. Involved in unsaturated fatty acids biosynthesis. Catalyzes the dehydration of short chain beta-hydroxyacyl-ACPs and long chain saturated and unsaturated beta-hydroxyacyl-ACPs. The sequence is that of 3-hydroxyacyl-[acyl-carrier-protein] dehydratase FabZ from Colwellia psychrerythraea (strain 34H / ATCC BAA-681) (Vibrio psychroerythus).